A 20-amino-acid polypeptide reads, in one-letter code: Short cationic peptide-3a (20 aa).

Position 20 is a glutamic acid 1-amide (glutamate 20).

In terms of tissue distribution, expressed by the venom gland.

The protein resides in the secreted. This chain is Short cationic peptide-3a, found in Cupiennius salei (American wandering spider).